Consider the following 649-residue polypeptide: Solute carrier family 22 member 16 (649 aa).

A helical transmembrane segment spans residues 19–39 (FQIVLYLICAYQSLSCGIHYL). N-linked (GlcNAc...) asparagine glycans are attached at residues N65 and N108. Transmembrane regions (helical) follow at residues 156-176 (MIQP…SYLS), 190-210 (IGVF…SFMI), 214-234 (FLVM…MEII), 244-264 (IHLN…SYLL), and 268-288 (WLYQ…CWML). N-linked (GlcNAc...) asparagine glycosylation occurs at N315. The next 6 membrane-spanning stretches (helical) occupy residues 356-376 (AKMT…YYMF), 389-409 (LYLL…CIWL), 417-437 (TMLL…VMPS), 445-465 (MVAL…YLYT), 475-495 (CLAV…IPFT), and 501-521 (VWIF…GLLS). Residues 530–544 (TPMKSTWETTEQQVP) are compositionally biased toward polar residues. Disordered stretches follow at residues 530 to 560 (TPMK…SFER) and 579 to 649 (SPDA…LGGF).

It belongs to the major facilitator (TC 2.A.1) superfamily. Organic cation transporter (TC 2.A.1.19) family.

It is found in the cell membrane. It catalyses the reaction (R)-carnitine(in) = (R)-carnitine(out). The enzyme catalyses spermidine(in) = spermidine(out). Functionally, facilitative organic cation transporter that mediates the transport of carnitine as well as the polyamine spermidine. Mediates the partially Na(+)-dependent bidirectional transport of carnitine. May mediate L-carnitine secretion from testis epididymal epithelium into the lumen which is involved in the maturation of spermatozoa. In Mus musculus (Mouse), this protein is Solute carrier family 22 member 16.